Here is a 202-residue protein sequence, read N- to C-terminus: Diadenylate cyclase (202 aa).

A helical transmembrane segment spans residues 6–26 (VFSVIILVLLFLILALTLLFV). In terms of domain architecture, DAC spans 29-185 (NKRTRSFVIR…RGVIKTLSSN (157 aa)).

It belongs to the adenylate cyclase family. DacB/CdaS subfamily. In terms of assembly, probably oligomerizes.

The protein localises to the cell membrane. It catalyses the reaction 2 ATP = 3',3'-c-di-AMP + 2 diphosphate. Its function is as follows. Catalyzes the condensation of 2 ATP molecules into cyclic di-AMP (c-di-AMP), a second messenger used to regulate differing processes in different bacteria. This is Diadenylate cyclase from Mycoplasma pneumoniae (strain ATCC 29342 / M129 / Subtype 1) (Mycoplasmoides pneumoniae).